A 504-amino-acid polypeptide reads, in one-letter code: Zinc finger CCCH-type with G patch domain-containing protein (504 aa).

The interval 95-121 (LSEDSNEVKPNPDTDEENEEEEQDISG) is disordered. The span at 107-118 (DTDEENEEEEQD) shows a compositional bias: acidic residues. Residues 165-191 (KSMKPCGFYLEGKCRFMDNCRYSHGEV) form a C3H1-type zinc finger. The G-patch domain occupies 308-354 (TRGIGSKLLMKMGYELGKGLGKTLSGRVEPVQAVVLPKGHSLDICAE).

The protein localises to the nucleus. In terms of biological role, transcription repressor that specifically binds the 5'-GGAG[GA]A[GA]A-3' consensus sequence. Represses transcription by recruiting the chromatin multiprotein complex NuRD to target promoters. Negatively regulates expression of EGFR, a gene involved in cell proliferation, survival and migration. The protein is Zinc finger CCCH-type with G patch domain-containing protein (zgpat) of Danio rerio (Zebrafish).